Here is a 23-residue protein sequence, read N- to C-terminus: Defensin D4 (23 aa).

Belongs to the DEFL family. Group IV subfamily. In terms of tissue distribution, distributed in the epidermal cell layer of leaves and in the subepidermal layer region of stems. Not in roots.

It localises to the secreted. The protein localises to the cell wall. Antimicrobial peptide. Active against Fusarium spp., Gram-positive and Gram-negative bacterial pathogens. The sequence is that of Defensin D4 from Spinacia oleracea (Spinach).